The sequence spans 186 residues: High mobility group protein B4 (186 aa).

2 DNA-binding regions (HMG box) span residues 9-79 and 93-161; these read PKAN…MNYV and PRRP…ELYR. The tract at residues 77–98 is disordered; sequence NYVGKRKKRRKRDPQEPRRPPS.

It belongs to the HMGB family.

It is found in the nucleus. The protein resides in the chromosome. This chain is High mobility group protein B4 (HMGB4), found in Homo sapiens (Human).